We begin with the raw amino-acid sequence, 298 residues long: DegV domain-containing protein UU535 (298 aa).

The region spanning 5 to 287 is the DegV domain; that stretch reads FLIMTDSSTT…KGALGIQVIA (283 aa). Hexadecanoate-binding residues include Ser65 and Ser96.

Its function is as follows. May bind long-chain fatty acids, such as palmitate, and may play a role in lipid transport or fatty acid metabolism. The chain is DegV domain-containing protein UU535 from Ureaplasma parvum serovar 3 (strain ATCC 700970).